Here is a 424-residue protein sequence, read N- to C-terminus: GTPase Obg (424 aa).

Residues 1-160 (MFDRVEINIK…YDLILELKLI (160 aa)) form the Obg domain. The 168-residue stretch at 161–328 (ADVAIIGYPN…LLAKVAEKLD (168 aa)) folds into the OBG-type G domain. Residues 167–174 (GYPNVGKS), 192–196 (FTTLS), 213–216 (EVPG), 280–283 (NKID), and 309–311 (SAL) contribute to the GTP site. Positions 174 and 194 each coordinate Mg(2+). Residues 349–424 (PAPKGKMGFR…IITGRMEWYL (76 aa)) form the OCT domain.

This sequence belongs to the TRAFAC class OBG-HflX-like GTPase superfamily. OBG GTPase family. Monomer. Requires Mg(2+) as cofactor.

It localises to the cytoplasm. Its function is as follows. An essential GTPase which binds GTP, GDP and possibly (p)ppGpp with moderate affinity, with high nucleotide exchange rates and a fairly low GTP hydrolysis rate. Plays a role in control of the cell cycle, stress response, ribosome biogenesis and in those bacteria that undergo differentiation, in morphogenesis control. The polypeptide is GTPase Obg (Dehalococcoides mccartyi (strain ATCC BAA-2100 / JCM 16839 / KCTC 5957 / BAV1)).